The following is a 334-amino-acid chain: D-alanine--D-alanine ligase (334 aa).

One can recognise an ATP-grasp domain in the interval 110-306 (KHVLKSLGID…FDHVVDLIVQ (197 aa)). ATP is bound at residue 138-190 (LPYPFVIKPVRGGSTIGVHAIFSKSEYLDLSAHADTLEDRMIVEEYVSGQEVQ). The Mg(2+) site is built by Asp-258, Glu-272, and Asn-274.

Belongs to the D-alanine--D-alanine ligase family. Mg(2+) is required as a cofactor. Mn(2+) serves as cofactor.

Its subcellular location is the cytoplasm. It carries out the reaction 2 D-alanine + ATP = D-alanyl-D-alanine + ADP + phosphate + H(+). The protein operates within cell wall biogenesis; peptidoglycan biosynthesis. Its function is as follows. Cell wall formation. This chain is D-alanine--D-alanine ligase, found in Anaplasma marginale (strain Florida).